The following is a 455-amino-acid chain: Exodeoxyribonuclease 7 large subunit (455 aa).

The protein belongs to the XseA family. In terms of assembly, heterooligomer composed of large and small subunits.

Its subcellular location is the cytoplasm. The enzyme catalyses Exonucleolytic cleavage in either 5'- to 3'- or 3'- to 5'-direction to yield nucleoside 5'-phosphates.. Functionally, bidirectionally degrades single-stranded DNA into large acid-insoluble oligonucleotides, which are then degraded further into small acid-soluble oligonucleotides. This is Exodeoxyribonuclease 7 large subunit from Escherichia coli (strain SMS-3-5 / SECEC).